The sequence spans 81 residues: Conotoxin Vc6.7 (81 aa).

A signal peptide spans 1–19 (MEKLTILLLVAAVLMSIQA). A propeptide spanning residues 20 to 44 (VNQEKHQRAKMNLLSKRKPPAERWW) is cleaved from the precursor. 3 disulfide bridges follow: Cys-49/Cys-63, Cys-56/Cys-67, and Cys-62/Cys-72.

This sequence belongs to the conotoxin O2 superfamily. As to expression, expressed by the venom duct.

The protein localises to the secreted. Inhibits voltage-gated ion channels. This chain is Conotoxin Vc6.7, found in Conus victoriae (Queen Victoria cone).